Consider the following 300-residue polypeptide: UPF0282 protein TGAM_0379 (300 aa).

The protein belongs to the UPF0282 family.

The sequence is that of UPF0282 protein TGAM_0379 from Thermococcus gammatolerans (strain DSM 15229 / JCM 11827 / EJ3).